The chain runs to 217 residues: AFG2-interacting ribosome maturation factor (217 aa).

In terms of assembly, part of the 55LCC heterohexameric ATPase complex composed at least of AIRIM, AFG2A, AFG2B and CINP. Does not associate with pre-60S ribosomal particles. Phosphorylated on serines by CK2 kinase.

The protein localises to the nucleus. It localises to the cytoplasm. Its function is as follows. Part of the 55LCC heterohexameric ATPase complex which is chromatin-associated and promotes replisome proteostasis to maintain replication fork progression and genome stability. Required for replication fork progression, sister chromatid cohesion, and chromosome stability. The ATPase activity is specifically enhanced by replication fork DNA and is coupled to cysteine protease-dependent cleavage of replisome substrates in response to replication fork damage. Uses ATPase activity to process replisome substrates in S-phase, facilitating their proteolytic turnover from chromatin to ensure DNA replication and mitotic fidelity. Involved in the cytoplasmic maturation steps of pre-60S ribosomal particles by promoting the release of shuttling protein RSL24D1/RLP24 from the pre-ribosomal particles. This is AFG2-interacting ribosome maturation factor (Airim) from Mus musculus (Mouse).